The primary structure comprises 935 residues: GPI ethanolamine phosphate transferase 1 (935 aa).

Residues 1–5 (MFGRL) lie on the Cytoplasmic side of the membrane. Residues 6–26 (LLLGILFHVVFLKSIFDIYFV) traverse the membrane as a helical segment. Residues 27 to 449 (TPLIHGMKQY…LQRYDWLLLR (423 aa)) are Lumenal-facing. Residues N86, N134, N315, and N398 are each glycosylated (N-linked (GlcNAc...) asparagine). Residues 450-470 (SIVFFGYLSWIGYVICFVFSL) form a helical membrane-spanning segment. Residues 471–483 (NIEPSSKIVKPVS) are Cytoplasmic-facing. The helical transmembrane segment at 484-503 (VVKRVAFNIPFLLICIFFYI) threads the bilayer. Residues 504 to 509 (QSSPPF) lie on the Lumenal side of the membrane. Residues 510-530 (YYGYALFPTIFLQLIHSIFPN) form a helical membrane-spanning segment. Over 531-547 (TKLGFKNFLTVAKQKHG) the chain is Cytoplasmic. A helical transmembrane segment spans residues 548 to 568 (FSLLKILFISLCILCLLQFIV). Residues 569 to 576 (YSYFHREG) lie on the Lumenal side of the membrane. Residues 577–597 (FSVILMGLAAWPWLLHADYAF) traverse the membrane as a helical segment. The Cytoplasmic portion of the chain corresponds to 598-600 (SHK). The helical transmembrane segment at 601 to 621 (TISVSWSVLTSLLCFFTILPV) threads the bilayer. The Lumenal portion of the chain corresponds to 622 to 626 (NKKES). Residues 627 to 647 (LLFIFAGGFAMSVAGVFYILY) form a helical membrane-spanning segment. Topologically, residues 648-663 (RRNQAFQYSSTVTNKQ) are cytoplasmic. A helical transmembrane segment spans residues 664 to 684 (LVLQVLIIMATVPVTLKIADS). Topologically, residues 685 to 688 (LQRN) are lumenal. Residues 689-709 (IAIPPILRLVAFGLFITSYII) form a helical membrane-spanning segment. Topologically, residues 710–737 (PSHHIRSCKHYFLDRLAILFLTFSPTMC) are cytoplasmic. The chain crosses the membrane as a helical span at residues 738–758 (MLSISFEALFYVVLFITLGLW). Residues 759 to 792 (MELETELQKYTEQLHPEYSRKKDAKFHLSLSHIR) are Lumenal-facing. Residues 793–813 (ISLFFYIFINVAFFGTGNVAS) traverse the membrane as a helical segment. Residues 814–835 (LSTFALDSVKRFIPVFNPVTQG) lie on the Cytoplasmic side of the membrane. A helical transmembrane segment spans residues 836-856 (ALLMYTILVPFIALSAAFGIM). Topologically, residues 857 to 865 (NKRLGGIQQ) are lumenal. The chain crosses the membrane as a helical span at residues 866 to 886 (VTFFLAVGMADIVTINFFYLV). Residues 887-894 (KDEGSWKD) are Cytoplasmic-facing. Residues 895-915 (IGVSISHFCISNFLILFITAL) traverse the membrane as a helical segment. The Lumenal portion of the chain corresponds to 916-935 (EHASAILCKNITYTIHEKVN). The N-linked (GlcNAc...) asparagine glycan is linked to N925.

Belongs to the PIGG/PIGN/PIGO family. PIGN subfamily.

The protein localises to the endoplasmic reticulum membrane. It participates in glycolipid biosynthesis; glycosylphosphatidylinositol-anchor biosynthesis. In terms of biological role, ethanolamine phosphate transferase involved in glycosylphosphatidylinositol-anchor biosynthesis. Transfers ethanolamine phosphate to the first alpha-1,4-linked mannose of the glycosylphosphatidylinositol precursor of GPI-anchor. The sequence is that of GPI ethanolamine phosphate transferase 1 (its8) from Schizosaccharomyces pombe (strain 972 / ATCC 24843) (Fission yeast).